Consider the following 355-residue polypeptide: MSLFDTINAGGAQLLGFAWPTVWAVVRILVVSVVILLCVAYLILWERKLIGWMHVRLGPNRVGPGGLLQPIADVLKLLLKEVIQPTAASRWLYLIAPIMTVVPAFAVWAVIPFQAEAVLANVNAGLLYAMAISSIGVYAVILAGWASNSKYAFLGAMRAAAQMVSYEISMGFALVLVLMTAGSLNLSEIVGSQQHGFFAGHGVNFLSWNWLPLLPAFVVYFISGIAETNRHPFDVVEGESEIVAGHMIDYSGMAFALFFLAEYINMIVISALAATLFLGGWDAPFEFLSFIPGIFWLVLKVFALLSVFIWVRATFPRFRYDQIMRLGWKVFLPVTVIWVVVVGCWMMSPLNIWVK.

8 helical membrane-spanning segments follow: residues 25–45 (VVRI…LILW), 91–111 (WLYL…WAVI), 126–146 (LLYA…AGWA), 170–190 (MGFA…SEIV), 205–225 (FLSW…ISGI), 253–273 (MAFA…SALA), 290–310 (FIPG…VFIW), and 330–350 (VFLP…MSPL).

Belongs to the complex I subunit 1 family. In terms of assembly, NDH-1 is composed of 14 different subunits. Subunits NuoA, H, J, K, L, M, N constitute the membrane sector of the complex.

The protein localises to the cell inner membrane. It catalyses the reaction a quinone + NADH + 5 H(+)(in) = a quinol + NAD(+) + 4 H(+)(out). Its function is as follows. NDH-1 shuttles electrons from NADH, via FMN and iron-sulfur (Fe-S) centers, to quinones in the respiratory chain. The immediate electron acceptor for the enzyme in this species is believed to be ubiquinone. Couples the redox reaction to proton translocation (for every two electrons transferred, four hydrogen ions are translocated across the cytoplasmic membrane), and thus conserves the redox energy in a proton gradient. This subunit may bind ubiquinone. This is NADH-quinone oxidoreductase subunit H from Burkholderia cenocepacia (strain ATCC BAA-245 / DSM 16553 / LMG 16656 / NCTC 13227 / J2315 / CF5610) (Burkholderia cepacia (strain J2315)).